Here is a 127-residue protein sequence, read N- to C-terminus: Small ribosomal subunit protein uS13 (127 aa).

Residues Arg-93–Thr-127 form a disordered region.

The protein belongs to the universal ribosomal protein uS13 family. In terms of assembly, part of the 30S ribosomal subunit. Forms a loose heterodimer with protein S19. Forms two bridges to the 50S subunit in the 70S ribosome.

In terms of biological role, located at the top of the head of the 30S subunit, it contacts several helices of the 16S rRNA. In the 70S ribosome it contacts the 23S rRNA (bridge B1a) and protein L5 of the 50S subunit (bridge B1b), connecting the 2 subunits; these bridges are implicated in subunit movement. Contacts the tRNAs in the A and P-sites. This chain is Small ribosomal subunit protein uS13, found in Acidobacterium capsulatum (strain ATCC 51196 / DSM 11244 / BCRC 80197 / JCM 7670 / NBRC 15755 / NCIMB 13165 / 161).